The following is a 778-amino-acid chain: DISP complex protein LRCH3 (778 aa).

10 LRR repeats span residues 56–79, 81–104, 105–127, 128–150, 152–172, 173–195, 197–218, 220–239, 240–264, and 266–290; these read AAVTGVLSLSGRKLREFPRGAANH, LTDTTRADLSRNRLSEIPMEACHF, VSLESLNLYQNCIRYIPEAVLNL, QALTFLNISRNQLSTLPVHLCNL, LKVLIASNNKLVSLPEEIGHL, RHLTELDVSCNEIQTVPSQIGNL, ALRDFNVRRNHLLRLPEELAEV, LIRLDFSCNKITVIPVCYRN, LRHLQVITLDNNPLQSPPAQICIKG, and IHIFKYLNIQACKIAPDLPDYERRP. The mediates interaction with DOCK7 stretch occupies residues 56 to 290; sequence AAVTGVLSLS…PDLPDYERRP (235 aa). Phosphoserine occurs at positions 324, 415, and 419. The segment at 382–642 is mediates direct interaction with MYO6; that stretch reads TTEEEENDVK…PATDPTDAIT (261 aa). Positions 511 to 536 are disordered; sequence QKASHNPQRQQPPGNGECSFPSRRSQ. The segment covering 514 to 523 has biased composition (polar residues); that stretch reads SHNPQRQQPP. Phosphoserine occurs at positions 608 and 625. Residues 645-758 form the Calponin-homology (CH) domain; sequence REEELKLIDQ…VTVQALLELA (114 aa). Positions 758-778 are disordered; that stretch reads APPKQPPPQQPQQQQPQLSAV. A compositionally biased stretch (low complexity) spans 768-778; the sequence is PQQQQPQLSAV.

As to quaternary structure, component of the DOCK7-induced septin displacement/DISP complex, at least composed of DOCK7, LRCH3 and MYO6.

The protein resides in the cytoplasm. Functionally, as part of the DISP complex, may regulate the association of septins with actin and thereby regulate the actin cytoskeleton. This Mus musculus (Mouse) protein is DISP complex protein LRCH3.